The following is a 388-amino-acid chain: Basigin (388 aa).

The N-terminal stretch at 1-21 is a signal peptide; the sequence is MAAGADVPCAVLALLVLGSLA. Topologically, residues 27–323 are extracellular; that stretch reads TAGFIKSPLS…SGSATVNLRV (297 aa). In terms of domain architecture, Ig-like spans 43-131; the sequence is DSVELHCEAV…NHLSKSPKVK (89 aa). Disulfide bonds link Cys-49-Cys-113 and Cys-162-Cys-211. The Ig-like C2-type domain occupies 143-218; the sequence is ERPVITGQYS…YECIYNTNPV (76 aa). Residues Asn-163, Asn-222, Asn-280, Asn-286, and Asn-307 are each glycosylated (N-linked (GlcNAc...) asparagine). The Ig-like V-type domain maps to 229–323; sequence PQVVAYKKSE…SGSATVNLRV (95 aa). A disulfide bridge connects residues Cys-250 and Cys-306. Residues 324–344 form a helical membrane-spanning segment; the sequence is RSRLAALWPFLGIVAEVLVLV. Residues 345–388 lie on the Cytoplasmic side of the membrane; that stretch reads TIIFIYEKRRKPDEVLDDDDGGSAPLKSNATNHKDKNVRQRNAN. Residues 358 to 388 are disordered; that stretch reads EVLDDDDGGSAPLKSNATNHKDKNVRQRNAN.

In terms of assembly, interacts with NXNL1, SLC2A1 and SLC16A1. In terms of processing, N-glycosylated. As to expression, retinal cone photoreceptors (at protein level). In terms of tissue distribution, brain endothelial cells, kidney epithelial cells and erythroblasts (at protein level).

It localises to the cell membrane. It is found in the photoreceptor inner segment. Its subcellular location is the cell projection. The protein resides in the cilium. The protein localises to the photoreceptor outer segment. It localises to the endoplasmic reticulum membrane. It is found in the basolateral cell membrane. Its function is as follows. Essential for normal retinal maturation and development. Acts as a retinal cell surface receptor for NXNL1 and plays an important role in NXNL1-mediated survival of retinal cone photoreceptors. In association with glucose transporter SLC16A1/GLUT1 and NXNL1, promotes retinal cone survival by enhancing aerobic glycolysis and accelerating the entry of glucose into photoreceptors. In terms of biological role, signaling receptor for cyclophilins, essential for PPIA/CYPA and PPIB/CYPB-dependent signaling related to chemotaxis and adhesion of immune cells. Plays an important role in targeting the monocarboxylate transporters SLC16A1/GLUT1, SLC16A3, SLC16A8, SLC16A11 and SLC16A12 to the plasma membrane. Acts as a coreceptor for vascular endothelial growth factor receptor 2 (KDR/VEGFR2) in endothelial cells enhancing its VEGFA-mediated activation and downstream signaling. Promotes angiogenesis through EPAS1/HIF2A-mediated up-regulation of VEGFA and KDR/VEGFR2 in endothelial cells. This is Basigin (BSG) from Gallus gallus (Chicken).